The chain runs to 108 residues: Urease subunit beta (108 aa).

The protein belongs to the urease beta subunit family. In terms of assembly, heterotrimer of UreA (gamma), UreB (beta) and UreC (alpha) subunits. Three heterotrimers associate to form the active enzyme.

It is found in the cytoplasm. The catalysed reaction is urea + 2 H2O + H(+) = hydrogencarbonate + 2 NH4(+). Its pathway is nitrogen metabolism; urea degradation; CO(2) and NH(3) from urea (urease route): step 1/1. The sequence is that of Urease subunit beta from Microcystis aeruginosa (strain NIES-843 / IAM M-2473).